The following is a 284-amino-acid chain: Tropomyosin isoforms a/b/d/f (284 aa).

A coiled-coil region spans residues M1–Y284. The tract at residues E40–V78 is disordered.

This sequence belongs to the tropomyosin family. In terms of tissue distribution, isoform a and isoform d are expressed in body wall muscles, vulva, anus muscles and male tail muscles. Located to the myofibrils of thin actin filaments.

Its subcellular location is the cytoplasm. It is found in the myofibril. The protein resides in the sarcomere. It localises to the i band. Its function is as follows. Tropomyosin, in association with the troponin complex, plays a central role in the calcium dependent regulation of muscle contraction. Involved in muscle actin filament organization and muscle arm extension and morphology. Protects actin filaments from depolymerization by unc-60 in vitro. Also has a role in male mating behavior by regulating the copulatory spicules. Binds to F-actin. The chain is Tropomyosin isoforms a/b/d/f (lev-11) from Caenorhabditis elegans.